A 226-amino-acid polypeptide reads, in one-letter code: Uracil-DNA glycosylase (226 aa).

Asp-64 (proton acceptor) is an active-site residue.

This sequence belongs to the uracil-DNA glycosylase (UDG) superfamily. UNG family.

It localises to the cytoplasm. The catalysed reaction is Hydrolyzes single-stranded DNA or mismatched double-stranded DNA and polynucleotides, releasing free uracil.. Its function is as follows. Excises uracil residues from the DNA which can arise as a result of misincorporation of dUMP residues by DNA polymerase or due to deamination of cytosine. The chain is Uracil-DNA glycosylase from Vibrio campbellii (strain ATCC BAA-1116).